The sequence spans 262 residues: Shikimate dehydrogenase (NADP(+)) (262 aa).

Residues 15-17 and threonine 62 contribute to the shikimate site; that span reads SRS. Lysine 66 functions as the Proton acceptor in the catalytic mechanism. An NADP(+)-binding site is contributed by glutamate 78. Shikimate is bound by residues asparagine 87 and aspartate 102. Residues 126 to 130, 150 to 155, and methionine 214 each bind NADP(+); these read GAGGA and NRTLAR. Tyrosine 216 contacts shikimate. Glycine 236 lines the NADP(+) pocket.

This sequence belongs to the shikimate dehydrogenase family. As to quaternary structure, homodimer.

It catalyses the reaction shikimate + NADP(+) = 3-dehydroshikimate + NADPH + H(+). Its pathway is metabolic intermediate biosynthesis; chorismate biosynthesis; chorismate from D-erythrose 4-phosphate and phosphoenolpyruvate: step 4/7. In terms of biological role, involved in the biosynthesis of the chorismate, which leads to the biosynthesis of aromatic amino acids. Catalyzes the reversible NADPH linked reduction of 3-dehydroshikimate (DHSA) to yield shikimate (SA). The polypeptide is Shikimate dehydrogenase (NADP(+)) (Acinetobacter baumannii (strain ACICU)).